We begin with the raw amino-acid sequence, 185 residues long: Ribosome-recycling factor (185 aa).

It belongs to the RRF family.

The protein resides in the cytoplasm. Functionally, responsible for the release of ribosomes from messenger RNA at the termination of protein biosynthesis. May increase the efficiency of translation by recycling ribosomes from one round of translation to another. This is Ribosome-recycling factor from Listeria welshimeri serovar 6b (strain ATCC 35897 / DSM 20650 / CCUG 15529 / CIP 8149 / NCTC 11857 / SLCC 5334 / V8).